The primary structure comprises 216 residues: Pyrrolidone-carboxylate peptidase (216 aa).

Active-site residues include Glu-80, Cys-143, and His-167.

This sequence belongs to the peptidase C15 family. In terms of assembly, homotetramer.

The protein localises to the cytoplasm. The enzyme catalyses Release of an N-terminal pyroglutamyl group from a polypeptide, the second amino acid generally not being Pro.. In terms of biological role, removes 5-oxoproline from various penultimate amino acid residues except L-proline. The chain is Pyrrolidone-carboxylate peptidase (pcp) from Streptomyces coelicolor (strain ATCC BAA-471 / A3(2) / M145).